The sequence spans 44 residues: uncharacterized protein (44 aa).

This is an uncharacterized protein from Saccharomyces cerevisiae (strain ATCC 204508 / S288c) (Baker's yeast).